An 86-amino-acid polypeptide reads, in one-letter code: Toxin 3FTx-Dis4 (86 aa).

The first 19 residues, 1–19 (MKTLLLSLVMVGFMYLVSG), serve as a signal peptide directing secretion. 3 disulfides stabilise this stretch: cysteine 24-cysteine 45, cysteine 38-cysteine 63, and cysteine 79-cysteine 84.

Belongs to the three-finger toxin family. Ancestral subfamily. Expressed by the venom gland.

The protein resides in the secreted. The sequence is that of Toxin 3FTx-Dis4 from Dispholidus typus (Boomslang).